The sequence spans 490 residues: 3-octaprenyl-4-hydroxybenzoate carboxy-lyase (490 aa).

Residue asparagine 172 coordinates Mn(2+). Residues 175–177 (IYR), 189–191 (RWL), and 194–195 (RG) contribute to the prenylated FMN site. A Mn(2+)-binding site is contributed by glutamate 238. The active-site Proton donor is aspartate 287.

Belongs to the UbiD family. In terms of assembly, homohexamer. The cofactor is prenylated FMN. It depends on Mn(2+) as a cofactor.

Its subcellular location is the cell membrane. The enzyme catalyses a 4-hydroxy-3-(all-trans-polyprenyl)benzoate + H(+) = a 2-(all-trans-polyprenyl)phenol + CO2. The protein operates within cofactor biosynthesis; ubiquinone biosynthesis. In terms of biological role, catalyzes the decarboxylation of 3-octaprenyl-4-hydroxy benzoate to 2-octaprenylphenol, an intermediate step in ubiquinone biosynthesis. The protein is 3-octaprenyl-4-hydroxybenzoate carboxy-lyase of Saccharophagus degradans (strain 2-40 / ATCC 43961 / DSM 17024).